The primary structure comprises 516 residues: Keratin, type II cuticular Hb2 (516 aa).

Residues 1-118 (MSCRNFQLSP…PTVQRVKRDE (118 aa)) form a head region. An IF rod domain is found at 118-429 (EKEQIKCLNN…RLLEGEEHRL (312 aa)). A coil 1A region spans residues 119–153 (KEQIKCLNNRFASFINKVRFLEQKNKLLETKWNFM). The tract at residues 154 to 163 (QQQRSCQSNM) is linker 1. A coil 1B region spans residues 164-264 (EPLFEGYICA…FEEEIGLLQS (101 aa)). The tract at residues 265 to 281 (QISETSVIVKMDNSREL) is linker 12. Positions 282 to 425 (DVDGIVAEIK…ATYRRLLEGE (144 aa)) are coil 2. The tail stretch occupies residues 426-516 (EHRLCEGIGP…VGVGSNSCSR (91 aa)).

Belongs to the intermediate filament family. In terms of assembly, heterotetramer of two type I and two type II keratins.

The protein is Keratin, type II cuticular Hb2 (Krt82) of Mus musculus (Mouse).